The sequence spans 164 residues: MEMTNAQRLILSNQYKMMTMLDPDNAERYRRLQTIIERGYGLQMRELDREFGELTEEVCRTIINVMEMHHALQVSWTNLKDKQDLDERRLTFLGFDAATEARYLGFVRFMVHVEGRYPHFDAGTHGFNAQTKMWEKYTRMLAVWQSCPRQYHLSAVEIAQIINA.

The protein belongs to the UPF0304 family.

This is UPF0304 protein ECA3037 from Pectobacterium atrosepticum (strain SCRI 1043 / ATCC BAA-672) (Erwinia carotovora subsp. atroseptica).